We begin with the raw amino-acid sequence, 428 residues long: Histidine--tRNA ligase (428 aa).

It belongs to the class-II aminoacyl-tRNA synthetase family. Homodimer.

It is found in the cytoplasm. The enzyme catalyses tRNA(His) + L-histidine + ATP = L-histidyl-tRNA(His) + AMP + diphosphate + H(+). The polypeptide is Histidine--tRNA ligase (Bordetella avium (strain 197N)).